A 246-amino-acid polypeptide reads, in one-letter code: Eukaryotic translation initiation factor 6 (246 aa).

It belongs to the eIF-6 family. As to quaternary structure, monomer. Associates with the 60S ribosomal subunit.

The protein resides in the cytoplasm. The protein localises to the nucleus. It is found in the nucleolus. Functionally, binds to the 60S ribosomal subunit and prevents its association with the 40S ribosomal subunit to form the 80S initiation complex in the cytoplasm. May also be involved in ribosome biogenesis. Involved in miRNA-mediated gene silencing. This is Eukaryotic translation initiation factor 6 from Caenorhabditis elegans.